Reading from the N-terminus, the 377-residue chain is 6-oxocyclohex-1-ene-1-carbonyl-CoA hydrolase (377 aa).

It belongs to the enoyl-CoA hydratase/isomerase family. As to quaternary structure, homotetramer.

The catalysed reaction is 6-oxocyclohex-1-ene-1-carbonyl-CoA + 2 H2O = 3-hydroxy-6-carboxyhexanoyl-CoA + H(+). It functions in the pathway aromatic compound metabolism; benzoyl-CoA degradation. Its function is as follows. Involved in the central benzoyl-CoA catabolism. Catalyzes the addition of one molecule of water to the double bond and the hydrolytic cleavage of C-C bond in the alicyclic ring, 6-oxocyclohex-1-ene-1-carbonyl-CoA (6-OCH-CoA) to yield 3-hydroxypimelyl-CoA. The chain is 6-oxocyclohex-1-ene-1-carbonyl-CoA hydrolase (oah) from Thauera aromatica.